We begin with the raw amino-acid sequence, 1002 residues long: Calcium-transporting ATPase sarcoplasmic/endoplasmic reticulum type (1002 aa).

The Cytoplasmic segment spans residues 1-48; sequence MEDGHSKTVEQSLNFFGTDGERGLTLDQIKTNQAKYGPNELPTEEGKS. A helical membrane pass occupies residues 49–69; it reads IWQLVLEQFDDLLVKILLLAA. The Lumenal portion of the chain corresponds to 70-89; the sequence is IISFVLALFEEHEETFTAFV. A helical membrane pass occupies residues 90 to 110; that stretch reads EPLVILLILIANAVVGVWQER. Residues 111 to 253 lie on the Cytoplasmic side of the membrane; the sequence is NAESAIEALK…EIKTPLQQKL (143 aa). Residues 254 to 273 form a helical membrane-spanning segment; the sequence is DEFGEQLSKVISVICVAVWA. Residues 274-295 lie on the Lumenal side of the membrane; that stretch reads INIGHFNDPAHGGSWIKGAIYY. A helical transmembrane segment spans residues 296–313; the sequence is FKIAVALAVAAIPEGLPA. Val304, Ala305, Ile307, and Glu309 together coordinate Ca(2+). Over 314-757 the chain is Cytoplasmic; sequence VITTCLALGT…EEGRAIYNNM (444 aa). Catalysis depends on Asp351, which acts as the 4-aspartylphosphate intermediate. Mg(2+)-binding residues include Asp703 and Asp707. A helical transmembrane segment spans residues 758-777; it reads KQFIRYLISSNIGEVVSIFL. Asn768 and Glu771 together coordinate Ca(2+). The Lumenal portion of the chain corresponds to 778–787; sequence TAALGLPEAL. A helical transmembrane segment spans residues 788–808; the sequence is IPVQLLWVNLVTDGLPATALG. Ca(2+)-binding residues include Asn796, Thr799, and Asp800. Residues 809-828 lie on the Cytoplasmic side of the membrane; the sequence is FNPPDLDIMDKPPRKADEGL. A helical membrane pass occupies residues 829–851; it reads ISGWLFFRYMAIGFYVGAATVGA. Topologically, residues 852 to 897 are lumenal; sequence AAWWFIASSEGPGLTYWQLTHHLSCLGGGDEFKGVDCKIFSDPKAM. Residues 898-917 form a helical membrane-spanning segment; it reads TMALSVLVTIEMLNAMNSLS. Glu908 serves as a coordination point for Ca(2+). Over 918 to 930 the chain is Cytoplasmic; it reads ENQSLISMPPWCN. Residues 931 to 949 traverse the membrane as a helical segment; sequence LWLIGSMALSFTLHFVILY. The Lumenal portion of the chain corresponds to 950–964; sequence VDVLSTVFQVTPLSA. A helical membrane pass occupies residues 965 to 985; it reads EEWITVMKFSIPVVLLDETLK. Residues 986 to 1002 are Cytoplasmic-facing; sequence FVARKIADVPDAVVDKW.

Belongs to the cation transport ATPase (P-type) (TC 3.A.3) family.

It is found in the endoplasmic reticulum membrane. The protein resides in the sarcoplasmic reticulum membrane. It catalyses the reaction Ca(2+)(in) + ATP + H2O = Ca(2+)(out) + ADP + phosphate + H(+). This magnesium-dependent enzyme catalyzes the hydrolysis of ATP coupled with the transport of calcium. This Drosophila pseudoobscura pseudoobscura (Fruit fly) protein is Calcium-transporting ATPase sarcoplasmic/endoplasmic reticulum type.